The sequence spans 636 residues: Eisosome protein sle1 (636 aa).

Residues 1-297 (MSHASKNYNA…HVIIYENKEG (297 aa)) form a required for targeting the protein to eisosomes region. 6 disordered regions span residues 111–205 (ANYM…SPAN), 222–284 (YSPS…VPPV), 313–387 (DPSG…TQHF), 400–451 (QYYQ…QPSL), 467–550 (DITP…VNNA), and 572–604 (PSNH…RFAN). Polar residues-rich tracts occupy residues 131 to 159 (PSQQ…QSYQ), 166 to 178 (RTSQ…NNYS), 188 to 204 (RRSS…GSPA), 237 to 255 (SYNN…TQKS), and 315 to 354 (SGSN…VVSR). A compositionally biased stretch (low complexity) spans 355-383 (SGQNNNQPAQPGQYNQQSQPVQSYQSGQS). Composition is skewed to polar residues over residues 400–412 (QYYQ…QPVQ) and 422–439 (PVQS…QPVQ). Low complexity predominate over residues 471–484 (TASSTTANNAYASA). A compositionally biased stretch (basic and acidic residues) spans 503–512 (SFERERDSGR). The span at 572 to 589 (PSNHAYSEGRSYTFTGGQ) shows a compositional bias: polar residues.

Component of eisosomes, large cytoplasmic protein assemblies that localize to specialized domains termed MCCs on the plasma membrane.

Its subcellular location is the cytoplasm. The protein resides in the cell cortex. The protein localises to the cell tip. Important for the biogenesis of filamentous eisosomes, large cytoplasmic protein assemblies that localize to specialized domains on the plasma membrane to cluster specific proteins at sites of membrane invaginations. This Schizosaccharomyces pombe (strain 972 / ATCC 24843) (Fission yeast) protein is Eisosome protein sle1 (sle1).